The chain runs to 1571 residues: Pentafunctional AROM polypeptide 2 (1571 aa).

The 3-dehydroquinate synthase stretch occupies residues 1–380; that stretch reads MAEPTKISIL…YEPKASVVSN (380 aa). NAD(+) contacts are provided by residues 44-46, 81-84, 112-114, and Asp117; these read DTN, ENSK, and GGV. Residue Arg128 participates in 7-phospho-2-dehydro-3-deoxy-D-arabino-heptonate binding. An NAD(+)-binding site is contributed by 137–138; it reads TT. Asp144 and Lys150 together coordinate 7-phospho-2-dehydro-3-deoxy-D-arabino-heptonate. Position 159 (Lys159) interacts with NAD(+). Asn160 is a binding site for 7-phospho-2-dehydro-3-deoxy-D-arabino-heptonate. NAD(+) contacts are provided by residues 177–180 and Asn188; that span reads FIDT. Glu192 contacts Zn(2+). Residues 192-195 and Lys246 contribute to the 7-phospho-2-dehydro-3-deoxy-D-arabino-heptonate site; that span reads EVIK. Glu256 (proton acceptor; for 3-dehydroquinate synthase activity) is an active-site residue. Residues 260–264 and His267 each bind 7-phospho-2-dehydro-3-deoxy-D-arabino-heptonate; that span reads RNLLN. A Zn(2+)-binding site is contributed by His267. His271 functions as the Proton acceptor; for 3-dehydroquinate synthase activity in the catalytic mechanism. 7-phospho-2-dehydro-3-deoxy-D-arabino-heptonate is bound by residues His283 and Lys352. Position 283 (His283) interacts with Zn(2+). An EPSP synthase region spans residues 393-838; sequence VIPGVPKNLN…WDALKQKFGV (446 aa). Catalysis depends on Cys820, which acts as the For EPSP synthase activity. Residues 859–1051 form a shikimate kinase region; it reads NASIIIIGMR…RKKHLSFFVS (193 aa). 866–873 is an ATP binding site; the sequence is GMRGAGKT. The tract at residues 1052–1273 is 3-dehydroquinase; the sequence is LTLPDLRESG…AAPGQLSAAE (222 aa). His1175 acts as the Proton acceptor; for 3-dehydroquinate dehydratase activity in catalysis. Lys1203 serves as the catalytic Schiff-base intermediate with substrate; for 3-dehydroquinate dehydratase activity. The tract at residues 1286–1571 is shikimate dehydrogenase; it reads AKKFAVLGKP…NAVLGTNETK (286 aa).

The protein in the N-terminal section; belongs to the sugar phosphate cyclases superfamily. Dehydroquinate synthase family. This sequence in the 2nd section; belongs to the EPSP synthase family. In the 3rd section; belongs to the shikimate kinase family. It in the 4th section; belongs to the type-I 3-dehydroquinase family. The protein in the C-terminal section; belongs to the shikimate dehydrogenase family. As to quaternary structure, homodimer. The cofactor is Zn(2+).

It is found in the cytoplasm. It catalyses the reaction 7-phospho-2-dehydro-3-deoxy-D-arabino-heptonate = 3-dehydroquinate + phosphate. It carries out the reaction 3-dehydroquinate = 3-dehydroshikimate + H2O. The catalysed reaction is shikimate + NADP(+) = 3-dehydroshikimate + NADPH + H(+). The enzyme catalyses shikimate + ATP = 3-phosphoshikimate + ADP + H(+). It catalyses the reaction 3-phosphoshikimate + phosphoenolpyruvate = 5-O-(1-carboxyvinyl)-3-phosphoshikimate + phosphate. It functions in the pathway metabolic intermediate biosynthesis; chorismate biosynthesis; chorismate from D-erythrose 4-phosphate and phosphoenolpyruvate: step 2/7. Its pathway is metabolic intermediate biosynthesis; chorismate biosynthesis; chorismate from D-erythrose 4-phosphate and phosphoenolpyruvate: step 3/7. It participates in metabolic intermediate biosynthesis; chorismate biosynthesis; chorismate from D-erythrose 4-phosphate and phosphoenolpyruvate: step 4/7. The protein operates within metabolic intermediate biosynthesis; chorismate biosynthesis; chorismate from D-erythrose 4-phosphate and phosphoenolpyruvate: step 5/7. It functions in the pathway metabolic intermediate biosynthesis; chorismate biosynthesis; chorismate from D-erythrose 4-phosphate and phosphoenolpyruvate: step 6/7. Its function is as follows. The AROM polypeptide catalyzes 5 consecutive enzymatic reactions in prechorismate polyaromatic amino acid biosynthesis. This Talaromyces marneffei (strain ATCC 18224 / CBS 334.59 / QM 7333) (Penicillium marneffei) protein is Pentafunctional AROM polypeptide 2.